The primary structure comprises 426 residues: UDP-N-acetylglucosamine 1-carboxyvinyltransferase (426 aa).

23-24 (KN) provides a ligand contact to phosphoenolpyruvate. UDP-N-acetyl-alpha-D-glucosamine is bound at residue Arg-99. Catalysis depends on Asp-123, which acts as the Proton donor. 2 residues coordinate UDP-N-acetyl-alpha-D-glucosamine: Asp-311 and Ile-333.

It belongs to the EPSP synthase family. MurA subfamily.

It is found in the cytoplasm. The enzyme catalyses phosphoenolpyruvate + UDP-N-acetyl-alpha-D-glucosamine = UDP-N-acetyl-3-O-(1-carboxyvinyl)-alpha-D-glucosamine + phosphate. It functions in the pathway cell wall biogenesis; peptidoglycan biosynthesis. Functionally, cell wall formation. Adds enolpyruvyl to UDP-N-acetylglucosamine. The protein is UDP-N-acetylglucosamine 1-carboxyvinyltransferase of Nocardia farcinica (strain IFM 10152).